Here is a 248-residue protein sequence, read N- to C-terminus: Myelin protein P0 (248 aa).

A signal peptide spans 1 to 29; sequence MAPGAPSSSPSPILAVLLFSSLVLSPAQA. The 114-residue stretch at 30–143 folds into the Ig-like V-type domain; that stretch reads IVVYTDREVH…DIVGKTSQVT (114 aa). Residues 30–153 are Extracellular-facing; it reads IVVYTDREVH…LYVFEKVPTR (124 aa). A disulfide bridge links C50 with C127. N-linked (GlcNAc...) (complex) asparagine glycosylation is present at N122. Residues 154–179 traverse the membrane as a helical segment; sequence YGVVLGAVIGGVLGVVLLLLLLFYVV. Over 180 to 248 the chain is Cytoplasmic; that stretch reads RYCWLRRQAA…GLGESRKDKK (69 aa). S210 is modified (phosphoserine; by PKC). A disordered region spans residues 224–248; that stretch reads DHSRSTKAVSEKKAKGLGESRKDKK. A phosphoserine mark is found at S226 and S228. Phosphoserine; by PKC occurs at positions 233 and 243.

It belongs to the myelin P0 protein family. Homodimer and homotetramer. In terms of processing, N-glycosylated; contains sulfate-substituted glycan. In terms of tissue distribution, found only in peripheral nervous system Schwann cells.

Its subcellular location is the cell membrane. The protein resides in the myelin membrane. Functionally, is an adhesion molecule necessary for normal myelination in the peripheral nervous system. It mediates adhesion between adjacent myelin wraps and ultimately drives myelin compaction. The sequence is that of Myelin protein P0 (MPZ) from Homo sapiens (Human).